Consider the following 275-residue polypeptide: L-aspartate dehydrogenase (275 aa).

Residues Ala130 and Asn196 each coordinate NAD(+). The active site involves His226.

It belongs to the L-aspartate dehydrogenase family.

The enzyme catalyses L-aspartate + NADP(+) + H2O = oxaloacetate + NH4(+) + NADPH + H(+). The catalysed reaction is L-aspartate + NAD(+) + H2O = oxaloacetate + NH4(+) + NADH + H(+). It participates in cofactor biosynthesis; NAD(+) biosynthesis; iminoaspartate from L-aspartate (dehydrogenase route): step 1/1. In terms of biological role, specifically catalyzes the NAD or NADP-dependent dehydrogenation of L-aspartate to iminoaspartate. This Ruegeria pomeroyi (strain ATCC 700808 / DSM 15171 / DSS-3) (Silicibacter pomeroyi) protein is L-aspartate dehydrogenase.